The primary structure comprises 31 residues: Phalloidin proprotein (31 aa).

Residues 1–10 (MSDINATRLP) constitute a propeptide that is removed on maturation. The cyclopeptide (Ala-Pro) cross-link spans 11–17 (AWLATCP). The segment at residues 12 to 16 (WLATC) is a cross-link (2'-cysteinyl-6'-hydroxytryptophan sulfoxide (Trp-Cys)). A propeptide spanning residues 18–31 (CAGDDVNPLLTRGE) is cleaved from the precursor.

This sequence belongs to the MSDIN fungal toxin family. In terms of processing, processed by the macrocyclase-peptidase enzyme POPB to yield a toxic cyclic heptapeptide. POPB first removes 10 residues from the N-terminus. Conformational trapping of the remaining peptide forces the enzyme to release this intermediate rather than proceed to macrocyclization. The enzyme rebinds the remaining peptide in a different conformation and catalyzes macrocyclization of the N-terminal 7 residues.

Major toxin that belongs to the bicyclic heptapeptides called phallotoxins. Although structurally related to amatoxins, phallotoxins have a different mode of action, which is the stabilization of F-actin. Phallotoxins are poisonous when administered parenterally, but not orally because of poor absorption. The protein is Phalloidin proprotein of Amanita ocreata (Western North American destroying angel).